Reading from the N-terminus, the 1012-residue chain is Centriole and centriolar satellite protein OFD1 (1012 aa).

The region spanning 70-102 (LIGASNSLVADHLQRCGYEYSLSVFFPESGLAK) is the LisH domain. Coiled coils occupy residues 189-557 (QRIK…ENEV) and 622-662 (DSDL…NSAK). Residues 609–665 (TNYPTAWVEGSSPDSDLEFVANTKARVKELQQEAERLEKAFRSYHRRVIKNSAKSPL) are mediates homooligomerization. The tract at residues 615-1012 (WVEGSSPDSD…FSHEELDDSW (398 aa)) is mediates the interaction with SDCCAG8. Phosphoserine is present on residues serine 663, serine 669, serine 686, and serine 720. Positions 719 to 744 (GSAASRLRGGTSSRRLSSTPLPKAKR) are disordered. Residues 720–737 (SAASRLRGGTSSRRLSST) show a composition bias toward low complexity. Serine 735 is modified (phosphoserine; by PKA). Phosphoserine is present on residues serine 745, serine 774, serine 789, and serine 811. The disordered stretch occupies residues 757-794 (RSHIASPSPCPDRMPLPSPTESRHSLSIPPVSSPPEQK). Over residues 764–774 (SPCPDRMPLPS) the composition is skewed to pro residues. Disordered regions lie at residues 824–904 (FESS…LQEV) and 963–1012 (KIIQ…DDSW). The stretch at 867-956 (SVDQKQIEEQ…IKDKSAHSEN (90 aa)) forms a coiled coil. Composition is skewed to basic and acidic residues over residues 871-904 (KQIE…LQEV) and 973-982 (SADKSSKKMV).

The protein belongs to the OFD1 family. Homooligomer. Interacts with LCA5. Interacts with RUVBL1; the interaction is direct and may mediate interaction with the NuA4 histone acetyltransferase complex. Interacts with SDCCAG8; the interaction is direct. Interacts with MAP1LC3B. Interacts with C2CD3; OFD1 may act as a negative regulator of C2CD3. Forms a complex with KIAA0753/OFIP and CEP20/FOR20; the interaction with CEP20 is detected only in the presence of KIAA0753. Interacts with PCM1; this interaction may be mediated by KIAA0753/OFIP. Interacts with TBC1D31; regulates OFD1 activity in cilium assembly. Phosphorylated. Phosphorylation at Ser-735, by the cAMP-dependent protein kinase PKA, triggers ubiquitination and proteasomal degradation of OFD1. Also increases its interaction with TBC1D31 and regulates its function in ciliogenesis. In terms of processing, ubiquitinated by PJA2, upon phosphorylation at Ser-735 by PKA, leads to the proteasomal degradation of OFD1. As to expression, widely expressed. Expressed in 9 and 14 weeks old embryos in metanephric mesenchyme, oral mucosa, lung, heart, nasal and cranial cartilage, and brain. Expressed in metanephros, brain, tongue, and limb.

Its subcellular location is the cytoplasm. The protein resides in the cytoskeleton. The protein localises to the microtubule organizing center. It localises to the centrosome. It is found in the centriole. Its subcellular location is the cilium basal body. The protein resides in the nucleus. The protein localises to the centriolar satellite. Functionally, component of the centrioles controlling mother and daughter centrioles length. Recruits to the centriole IFT88 and centriole distal appendage-specific proteins including CEP164. Involved in the biogenesis of the cilium, a centriole-associated function. The cilium is a cell surface projection found in many vertebrate cells required to transduce signals important for development and tissue homeostasis. Plays an important role in development by regulating Wnt signaling and the specification of the left-right axis. Only OFD1 localized at the centriolar satellites is removed by autophagy, which is an important step in the ciliogenesis regulation. The chain is Centriole and centriolar satellite protein OFD1 (OFD1) from Homo sapiens (Human).